A 48-amino-acid chain; its full sequence is Large ribosomal subunit protein bL33B (48 aa).

This sequence belongs to the bacterial ribosomal protein bL33 family.

The sequence is that of Large ribosomal subunit protein bL33B (rpmG 2) from Mycoplasmoides gallisepticum (strain R(low / passage 15 / clone 2)) (Mycoplasma gallisepticum).